A 342-amino-acid polypeptide reads, in one-letter code: Cystein proteinase inhibitor protein salarin (342 aa).

An N-terminal signal peptide occupies residues 1-19 (MKSLVLLLLVAVTVSSVVS). Residue N153 is glycosylated (N-linked (GlcNAc) asparagine). T184 is a glycosylation site (O-linked (GlcNAc) threonine).

In terms of processing, N-glycosylated, with sialylated biantennary complex-type glycans. Post-translationally, O-glycosylated, with sialylated oligosaccharides. In terms of tissue distribution, expressed in the skin, liver. intestine, spleen, pancreas and kidney.

It is found in the cytoplasm. Its subcellular location is the vacuole. Inhibits papain and ficin (cysteine proteinases) but not trypsin (a serine proteinase). The protein is Cystein proteinase inhibitor protein salarin (salarin) of Salmo salar (Atlantic salmon).